A 451-amino-acid polypeptide reads, in one-letter code: Probable glycine dehydrogenase (decarboxylating) subunit 1 (451 aa).

It belongs to the GcvP family. N-terminal subunit subfamily. In terms of assembly, the glycine cleavage system is composed of four proteins: P, T, L and H. In this organism, the P 'protein' is a heterodimer of two subunits.

It carries out the reaction N(6)-[(R)-lipoyl]-L-lysyl-[glycine-cleavage complex H protein] + glycine + H(+) = N(6)-[(R)-S(8)-aminomethyldihydrolipoyl]-L-lysyl-[glycine-cleavage complex H protein] + CO2. Functionally, the glycine cleavage system catalyzes the degradation of glycine. The P protein binds the alpha-amino group of glycine through its pyridoxal phosphate cofactor; CO(2) is released and the remaining methylamine moiety is then transferred to the lipoamide cofactor of the H protein. This chain is Probable glycine dehydrogenase (decarboxylating) subunit 1, found in Thermococcus kodakarensis (strain ATCC BAA-918 / JCM 12380 / KOD1) (Pyrococcus kodakaraensis (strain KOD1)).